The primary structure comprises 166 residues: Tetranectin-like protein (166 aa).

Disulfide bonds link Cys-37/Cys-47, Cys-64/Cys-160, and Cys-136/Cys-152. The C-type lectin domain occupies 43–161 (IHKKCYLASR…CRSEKRYICE (119 aa)).

In Carcharhinus perezii (Reef shark), this protein is Tetranectin-like protein.